We begin with the raw amino-acid sequence, 380 residues long: Queuine tRNA-ribosyltransferase (380 aa).

Asp-96 acts as the Proton acceptor in catalysis. Substrate contacts are provided by residues 96-100, Asp-150, Gln-193, and Gly-220; that span reads DSGGF. An RNA binding region spans residues 251–257; it reads GVGAPDS. Asp-270 serves as the catalytic Nucleophile. Positions 275 to 279 are RNA binding; important for wobble base 34 recognition; the sequence is TRIAR. Zn(2+)-binding residues include Cys-308, Cys-310, Cys-313, and His-339.

The protein belongs to the queuine tRNA-ribosyltransferase family. Homodimer. Within each dimer, one monomer is responsible for RNA recognition and catalysis, while the other monomer binds to the replacement base PreQ1. It depends on Zn(2+) as a cofactor.

It catalyses the reaction 7-aminomethyl-7-carbaguanine + guanosine(34) in tRNA = 7-aminomethyl-7-carbaguanosine(34) in tRNA + guanine. It functions in the pathway tRNA modification; tRNA-queuosine biosynthesis. Functionally, catalyzes the base-exchange of a guanine (G) residue with the queuine precursor 7-aminomethyl-7-deazaguanine (PreQ1) at position 34 (anticodon wobble position) in tRNAs with GU(N) anticodons (tRNA-Asp, -Asn, -His and -Tyr). Catalysis occurs through a double-displacement mechanism. The nucleophile active site attacks the C1' of nucleotide 34 to detach the guanine base from the RNA, forming a covalent enzyme-RNA intermediate. The proton acceptor active site deprotonates the incoming PreQ1, allowing a nucleophilic attack on the C1' of the ribose to form the product. After dissociation, two additional enzymatic reactions on the tRNA convert PreQ1 to queuine (Q), resulting in the hypermodified nucleoside queuosine (7-(((4,5-cis-dihydroxy-2-cyclopenten-1-yl)amino)methyl)-7-deazaguanosine). The chain is Queuine tRNA-ribosyltransferase from Streptococcus agalactiae serotype Ia (strain ATCC 27591 / A909 / CDC SS700).